We begin with the raw amino-acid sequence, 249 residues long: 2,3-bisphosphoglycerate-dependent phosphoglycerate mutase (249 aa).

Residues 9–16 (RHGQSQWN), 22–23 (TG), Arg-61, 88–91 (ERHY), Lys-99, 115–116 (RR), and 184–185 (GN) each bind substrate. Catalysis depends on His-10, which acts as the Tele-phosphohistidine intermediate. Residue Glu-88 is the Proton donor/acceptor of the active site.

Belongs to the phosphoglycerate mutase family. BPG-dependent PGAM subfamily. As to quaternary structure, homodimer.

The catalysed reaction is (2R)-2-phosphoglycerate = (2R)-3-phosphoglycerate. It participates in carbohydrate degradation; glycolysis; pyruvate from D-glyceraldehyde 3-phosphate: step 3/5. Its function is as follows. Catalyzes the interconversion of 2-phosphoglycerate and 3-phosphoglycerate. The polypeptide is 2,3-bisphosphoglycerate-dependent phosphoglycerate mutase (Xanthomonas euvesicatoria pv. vesicatoria (strain 85-10) (Xanthomonas campestris pv. vesicatoria)).